Here is a 747-residue protein sequence, read N- to C-terminus: ATP-dependent DNA helicase Hel308 (747 aa).

Residues glutamine 29 and 47–54 (VPTASGKT) contribute to the ATP site. Residues 34–200 (DAGVADGESL…WLDAELVDSS (167 aa)) form the Helicase ATP-binding domain. Residues 145 to 148 (DEVH) carry the DEAH box motif. The Helicase C-terminal domain occupies 234-434 (PTEAVVRETL…REPSMRTHLL (201 aa)). The tract at residues 711–747 (AAGHQQPEMDGVTPDADVKESAAAAGTDDGQANLGDF) is disordered.

Belongs to the helicase family. Hel308 subfamily. As to quaternary structure, monomer.

The catalysed reaction is Couples ATP hydrolysis with the unwinding of duplex DNA by translocating in the 3'-5' direction.. The enzyme catalyses ATP + H2O = ADP + phosphate + H(+). Functionally, DNA-dependent ATPase and 3'-5' DNA helicase that may be involved in repair of stalled replication forks. This is ATP-dependent DNA helicase Hel308 from Natronomonas pharaonis (strain ATCC 35678 / DSM 2160 / CIP 103997 / JCM 8858 / NBRC 14720 / NCIMB 2260 / Gabara) (Halobacterium pharaonis).